The following is a 329-amino-acid chain: DNA-directed RNA polymerase subunit alpha (329 aa).

The interval 1–235 is alpha N-terminal domain (alpha-NTD); sequence MQGSVTEFLK…EQLEAFVDLR (235 aa). Positions 249-329 are alpha C-terminal domain (alpha-CTD); that stretch reads FDPILLRPVD…NWPPASIADE (81 aa).

This sequence belongs to the RNA polymerase alpha chain family. Homodimer. The RNAP catalytic core consists of 2 alpha, 1 beta, 1 beta' and 1 omega subunit. When a sigma factor is associated with the core the holoenzyme is formed, which can initiate transcription.

The catalysed reaction is RNA(n) + a ribonucleoside 5'-triphosphate = RNA(n+1) + diphosphate. Functionally, DNA-dependent RNA polymerase catalyzes the transcription of DNA into RNA using the four ribonucleoside triphosphates as substrates. The chain is DNA-directed RNA polymerase subunit alpha from Enterobacter sp. (strain 638).